A 557-amino-acid chain; its full sequence is Formate--tetrahydrofolate ligase (557 aa).

66 to 73 (TPAGEGKT) provides a ligand contact to ATP.

It belongs to the formate--tetrahydrofolate ligase family.

It catalyses the reaction (6S)-5,6,7,8-tetrahydrofolate + formate + ATP = (6R)-10-formyltetrahydrofolate + ADP + phosphate. Its pathway is one-carbon metabolism; tetrahydrofolate interconversion. In Bartonella tribocorum (strain CIP 105476 / IBS 506), this protein is Formate--tetrahydrofolate ligase.